The chain runs to 164 residues: UPF0304 protein NT01EI_2691 (164 aa).

It belongs to the UPF0304 family.

This Edwardsiella ictaluri (strain 93-146) protein is UPF0304 protein NT01EI_2691.